The following is a 1065-amino-acid chain: Inversin (1065 aa).

16 ANK repeats span residues 13-42 (SLAS…ALKD), 47-76 (FGRT…DVNK), 80-110 (SQRT…WMQK), 113-144 (EEMT…EVDT), 148-177 (NKQT…NIGI), 181-213 (EGKI…TESL), 220-250 (EGRT…NITS), 254-283 (LFRT…SGTI), 288-317 (QGAT…VKDD), 321-350 (EGRT…DIDI), 356-385 (YGGT…QVDA), 389-418 (MKHT…RVDL), 422-451 (DGHS…NPNV), 455-484 (AGRT…DPNI), 488-517 (EGRT…FPNQ), and 523-553 (ERYT…SIAA). 3-hydroxyasparagine is present on Asn75. The short motif at 490–498 (RTALHWSCN) is the D-box 1 element. The IQ 1 domain maps to 555 to 584 (QDIAAFKIQAVYKGYKVRKAFRDRKNLLMK). Over residues 589-616 (RKDAAAKKREEENKRKEAEQQKGRRSPD) the composition is skewed to basic and acidic residues. Disordered stretches follow at residues 589–833 (RKDA…TPRN) and 847–886 (HLPQ…PLSG). Over residues 627 to 640 (PSTQDVPSRQSRAP) the composition is skewed to polar residues. Ser661 is modified (phosphoserine). A compositionally biased stretch (polar residues) spans 677-686 (SSDLQGTNSR). Basic and acidic residues-rich tracts occupy residues 687–697 (RPNETAREHSK), 706–715 (RPNEGSDGSR), 723–736 (EKSR…ERCA), 752–762 (GPDEKGEDSRR), 770–786 (HDSH…EPKA), and 853–863 (EELRSGARRLE). Positions 909-917 (RKELFRKKN) match the D-box 2 motif. One can recognise an IQ 2 domain in the interval 916–945 (KNKAAAVIQRAWRSYQLRKHLSHLRHMKQL). Residues 976 to 999 (TTAVSKAPKSPSKGTSGTKSTKHS) are disordered. The span at 983 to 994 (PKSPSKGTSGTK) shows a compositional bias: low complexity.

In terms of assembly, binds calmodulin via its IQ domains. Interacts with APC2. Interacts with alpha-, beta-, and gamma-catenin. Interacts with N-cadherin (CDH2). Interacts with microtubules. Interacts with NPHP1. Interacts with DVL1, PRICKLE (PRICKLE1 or PRICKLE2) and Strabismus (VANGL1 or VANGL2). Interacts with IQCB1; the interaction likely requires additional interactors. Component of a complex containing at least ANKS6, INVS, NEK8 and NPHP3. ANKS6 may organize complex assembly by linking INVS and NPHP3 to NEK8 and INVS may target the complex to the proximal ciliary axoneme. May be ubiquitinated via its interaction with APC2. In terms of processing, hydroxylated at Asn-75, most probably by HIF1AN. Widely expressed. Strongly expressed in the primary cilia of renal tubular cells.

It localises to the cytoplasm. Its subcellular location is the cytoskeleton. The protein resides in the spindle. The protein localises to the membrane. It is found in the nucleus. It localises to the cell projection. Its subcellular location is the cilium. Functionally, required for normal renal development and establishment of left-right axis. Probably acts as a molecular switch between different Wnt signaling pathways. Inhibits the canonical Wnt pathway by targeting cytoplasmic disheveled (DVL1) for degradation by the ubiquitin-proteasome. This suggests that it is required in renal development to oppose the repression of terminal differentiation of tubular epithelial cells by Wnt signaling. Involved in the organization of apical junctions in kidney cells together with NPHP1, NPHP4 and RPGRIP1L/NPHP8. Does not seem to be strictly required for ciliogenesis. In Homo sapiens (Human), this protein is Inversin (INVS).